The following is a 220-amino-acid chain: Iron-sulfur cluster repair protein YtfE (220 aa).

This sequence belongs to the RIC family. YtfE subfamily. In terms of assembly, homodimer.

The protein localises to the cytoplasm. Functionally, di-iron-containing protein involved in the repair of iron-sulfur clusters damaged by oxidative and nitrosative stress conditions. The protein is Iron-sulfur cluster repair protein YtfE of Salmonella typhimurium (strain LT2 / SGSC1412 / ATCC 700720).